The sequence spans 282 residues: MTKVFINGEFVNEEDAKVSYEDRGYVFGDGIYEYIRAYDGKLFTVKEHFERFLRSAEEIGLDLNYTIEELIELVRRLLKENNVVNGGIYIQATRGAAPRNHSFPTPPVKPVIMAFTKSYDRPYEELEQGVYAITTEDIRWLRCDIKSLNLLGNVLAKEYAVKYNAAEAIQHRGDIVTEGASSNVYAIKDGVIYTHPVNNFILNGITRRVIKWIAEDEQIPFKEEKFTVEFLKSADEVIISSTSAEVMPITKIDGENVQDGQVGTITRQLQQGFEKYIQSHSI.

Y32 contributes to the substrate binding site. Residue R51 participates in pyridoxal 5'-phosphate binding. The substrate site is built by R99 and H101. The Proton acceptor role is filled by K146. K146 carries the N6-(pyridoxal phosphate)lysine modification. E178 lines the pyridoxal 5'-phosphate pocket.

This sequence belongs to the class-IV pyridoxal-phosphate-dependent aminotransferase family. Homodimer. The cofactor is pyridoxal 5'-phosphate.

It catalyses the reaction D-alanine + 2-oxoglutarate = D-glutamate + pyruvate. Functionally, acts on the D-isomers of alanine, leucine, aspartate, glutamate, aminobutyrate, norvaline and asparagine. The enzyme transfers an amino group from a substrate D-amino acid to the pyridoxal phosphate cofactor to form pyridoxamine and an alpha-keto acid in the first half-reaction. The second half-reaction is the reverse of the first, transferring the amino group from the pyridoxamine to a second alpha-keto acid to form the product D-amino acid via a ping-pong mechanism. This is an important process in the formation of D-alanine and D-glutamate, which are essential bacterial cell wall components. This chain is D-alanine aminotransferase (dat), found in Staphylococcus epidermidis (strain ATCC 35984 / DSM 28319 / BCRC 17069 / CCUG 31568 / BM 3577 / RP62A).